The primary structure comprises 317 residues: NF-kappa-B inhibitor alpha (317 aa).

A disordered region spans residues 1–39 (MFQAAERPQEWAMEGPRDGLKKERLLDDRHDSGLDSMKD). Residues 15–39 (GPRDGLKKERLLDDRHDSGLDSMKD) show a composition bias toward basic and acidic residues. Residue lysine 21 forms a Glycyl lysine isopeptide (Lys-Gly) (interchain with G-Cter in SUMO); alternate linkage. Residue lysine 21 forms a Glycyl lysine isopeptide (Lys-Gly) (interchain with G-Cter in ubiquitin); alternate linkage. A Glycyl lysine isopeptide (Lys-Gly) (interchain with G-Cter in ubiquitin) cross-link involves residue lysine 22. Residues 30 to 36 (HDSGLDS) carry the Destruction motif motif. Residue serine 32 is modified to Phosphoserine; by IKKA and IKKE. Position 36 is a phosphoserine; by IKKA, IKKB, IKKE and TBK1 (serine 36). Tyrosine 42 bears the Phosphotyrosine; by Tyr-kinases mark. The Nuclear export signal signature appears at 45–54 (MVKELQEIRL). 5 ANK repeats span residues 73–103 (DGDS…DLAF), 110–139 (LQQT…DPEL), 143–172 (RGNT…TPHL), 182–211 (NGHT…DVNA), and 216–245 (NGRT…DVNR). The Nuclear import signal motif lies at 110-120 (LQQTPLHLAVI). (3S)-3-hydroxyasparagine; by HIF1AN; partial occurs at positions 210 and 244. Residues serine 283 and serine 288 each carry the phosphoserine; by CK2 modification. Position 291 is a phosphothreonine; by CK2 (threonine 291). A Phosphoserine; by CK2 modification is found at serine 293. Threonine 299 is subject to Phosphothreonine; by CK2.

The protein belongs to the NF-kappa-B inhibitor family. Interacts with RELA; the interaction requires the nuclear import signal. Part of a 70-90 kDa complex at least consisting of CHUK, IKBKB, NFKBIA, RELA, ELP1 and MAP3K14. Interacts with NKIRAS1 and NKIRAS2. Interacts with isoform 1 and isoform 2 of RWDD3; the interaction enhances sumoylation. Interacts with PRMT2. Interacts with PRKACA in platelets; this interaction is disrupted by thrombin and collagen. Interacts with MEFV. Interacts with DDRGK1; positively regulates NFKBIA phosphorylation and degradation. Interacts with HNRNPA2B1; the interaction may be mediated by the RRM2 domain of HNRNPA2B1, and HNRNPA2B1 may interact simultaneously with FAM76B and either NFKBIA or NFKBIE to form a complex. In terms of assembly, (Microbial infection) Interacts with HBV protein X. Phosphorylated at Ser-32 and Ser-36 by IKKA/CHUK and IKKB/IKBKB; disables inhibition of NF-kappa-B DNA-binding activity. Phosphorylation at positions 32 and 36 is prerequisite to recognition by the SCF(FBXW11) and SCF(BTRC) complexes, leading to polyubiquitination and subsequent degradation. Phosphorylated at Ser-32 in response to FK506 treatment: phosphorylation is independent of IKKA/CHUK and IKKB/IKBKB and promotes NFKBIA degradation, followed by NF-kappa-B activation. Phosphorylated at Tyr-42: its effect is however unclear. According to a report, phosphorylation at Tyr-42 activates NF-kappa-B without triggering proteolytic degradation of NFKBIA. According to another publication, phosphorylation at Tyr-42 inhibits NF-kappa-B activity by preventing phosphorylation at Ser-32 and Ser-36 and subsequent ubiquitination and degradation. In terms of processing, polyubiquitinated at Lys-21 and/or Lys-22 following phosphorylation at Ser-32 and Ser-36. Monoubiquitinated at Lys-21 and/or Lys-22 by UBE2D3. Ubiquitin chain elongation is then performed by CDC34 in cooperation with the SCF(FBXW11) E3 ligase complex, building ubiquitin chains from the UBE2D3-primed NFKBIA-linked ubiquitin. The resulting polyubiquitination leads to protein degradation. Also ubiquitinated by the SCF(BTRC) complex following stimulus-dependent phosphorylation at Ser-32 and Ser-36. Deubiquitinated by USP38, leading to NF-kappa-B inhibition. Post-translationally, sumoylated; sumoylation requires the presence of the nuclear import signal. Sumoylation blocks ubiquitination and proteasome-mediated degradation of the protein thereby increasing the protein stability. Hydroxylated by HIF1AN. In terms of processing, (Microbial infection) Deubiquitinated by porcine reproductive and respiratory syndrome virus Nsp2 protein, which thereby interferes with NFKBIA degradation and impairs subsequent NF-kappa-B activation.

The protein localises to the cytoplasm. It localises to the nucleus. Functionally, inhibits the activity of dimeric NF-kappa-B/REL complexes by trapping REL (RELA/p65 and NFKB1/p50) dimers in the cytoplasm by masking their nuclear localization signals. On cellular stimulation by immune and pro-inflammatory responses, becomes phosphorylated promoting ubiquitination and degradation, enabling the dimeric RELA to translocate to the nucleus and activate transcription. This chain is NF-kappa-B inhibitor alpha (NFKBIA), found in Homo sapiens (Human).